The chain runs to 473 residues: Glutamate--tRNA ligase (473 aa).

Positions 9 to 19 (PSPTGYLHVGG) match the 'HIGH' region motif. Zn(2+) is bound by residues C98, C100, C125, and D127. The 'KMSKS' region signature appears at 237–241 (KLSKR). K240 is a binding site for ATP.

The protein belongs to the class-I aminoacyl-tRNA synthetase family. Glutamate--tRNA ligase type 1 subfamily. In terms of assembly, monomer. Zn(2+) serves as cofactor.

Its subcellular location is the cytoplasm. It catalyses the reaction tRNA(Glu) + L-glutamate + ATP = L-glutamyl-tRNA(Glu) + AMP + diphosphate. Functionally, catalyzes the attachment of glutamate to tRNA(Glu) in a two-step reaction: glutamate is first activated by ATP to form Glu-AMP and then transferred to the acceptor end of tRNA(Glu). The protein is Glutamate--tRNA ligase of Sodalis glossinidius (strain morsitans).